The chain runs to 206 residues: Thymidylate kinase (206 aa).

ATP is bound at residue 10–17 (GVDGVGKT).

Belongs to the thymidylate kinase family.

It carries out the reaction dTMP + ATP = dTDP + ADP. Phosphorylation of dTMP to form dTDP in both de novo and salvage pathways of dTTP synthesis. This is Thymidylate kinase from Bifidobacterium longum (strain DJO10A).